The primary structure comprises 61 residues: MFIVFLLVVLATTVGSFTLDRVLEGRNAAAIDNALDQRDPKRQTPGCCWNPACVKNRCGRR.

Residues 1-16 form the signal peptide; the sequence is MFIVFLLVVLATTVGS. Positions 17–40 are excised as a propeptide; sequence FTLDRVLEGRNAAAIDNALDQRDP. Pyrrolidone carboxylic acid is present on Gln43. The residue at position 45 (Pro45) is a Hydroxyproline. 2 disulfide bridges follow: Cys47-Cys53 and Cys48-Cys58. Cysteine amide is present on Cys58.

Belongs to the conotoxin A superfamily. As to expression, expressed by the venom duct.

The protein resides in the secreted. Functionally, alpha-conotoxins bind to the nicotinic acetylcholine receptors (nAChR) and inhibit them. This peptide potently blocks muscular nicotinic acetylcholine receptor (CHRNA1-CHRNB1-CHRNG-CHRND), and has no effect on neuronal receptors. It is able to totally displace [125I]-Bgtx from the Torpedo receptor with a complete inhibition in the high micromolar range. It produces a biphasic inhibition curve which fits nicely with a two-site model (Ki of 0.46 and 105 nM). In Conus ermineus (Agate cone), this protein is Alpha-conotoxin EIIA.